A 523-amino-acid polypeptide reads, in one-letter code: Cyclin-dependent kinase 17 (523 aa).

Ser9 carries the phosphoserine modification. The disordered stretch occupies residues 31–55 (IEESSSKDNEPIVKNGRPPTSHSMH). Phosphoserine occurs at positions 80, 92, and 105. Residues 103–123 (MGSDGESDQASGTSSDEVQSP) are disordered. A compositionally biased stretch (polar residues) spans 110–123 (DQASGTSSDEVQSP). Residues Ser137, Ser146, Ser165, and Ser180 each carry the phosphoserine modification. The region spanning 192–473 (YIKLEKLGEG…AEEAMKHVYF (282 aa)) is the Protein kinase domain. ATP is bound by residues 198-206 (LGEGTYATV) and Lys221. Asp313 serves as the catalytic Proton acceptor.

This sequence belongs to the protein kinase superfamily. CMGC Ser/Thr protein kinase family. CDC2/CDKX subfamily. In terms of assembly, found in a complex containing CABLES1, CDK16 and TDRD7. Interacts with TDRD7. As to expression, brain specific. Within the brain it is concentrated in the neuronal layers of the hippocampus and olfactory bulb, which mostly consist of post-mitotic neurons.

It carries out the reaction L-seryl-[protein] + ATP = O-phospho-L-seryl-[protein] + ADP + H(+). The catalysed reaction is L-threonyl-[protein] + ATP = O-phospho-L-threonyl-[protein] + ADP + H(+). Functionally, may play a role in terminally differentiated neurons. Has a Ser/Thr-phosphorylating activity for histone H1. In Rattus norvegicus (Rat), this protein is Cyclin-dependent kinase 17 (Cdk17).